Here is a 3546-residue protein sequence, read N- to C-terminus: Ubiquitin carboxyl-terminal hydrolase 34 (3546 aa).

Residues Ser-352, Ser-486, Ser-487, and Ser-490 each carry the phosphoserine modification. Disordered stretches follow at residues 502–535 (KEEE…SGGS), 550–679 (VQQR…VFNT), and 1459–1478 (TGSY…DQVE). Low complexity predominate over residues 511 to 524 (APSPWSPAASPQSS). 2 stretches are compositionally biased toward polar residues: residues 525-534 (DNSDTHQSGG) and 560-570 (SMQGSSDETAN). Residues 571-590 (SGEDGSSGPGSSSGHSDGSS) are compositionally biased toward low complexity. Polar residues predominate over residues 591 to 609 (NEVNSSHASQSAGSPGSEV). Positions 610-627 (QSEDIADIEALKEEDEDD) are enriched in acidic residues. Phosphoserine is present on Ser-649. The span at 659-671 (QGMSERNGTSSGT) shows a compositional bias: polar residues. Acidic residues predominate over residues 1467 to 1477 (PDSDDSSEDQV). Ser-1469 carries the phosphoserine modification. Positions 1894–2239 (VGLTNLGATC…SAYMLFYKRM (346 aa)) constitute a USP domain. Cys-1903 (nucleophile) is an active-site residue. Residue His-2164 is the Proton acceptor of the active site. The residue at position 2488 (Ser-2488) is a Phosphoserine. Positions 3331-3443 (NSLQEQEAKE…HAEEQSNNGR (113 aa)) are disordered. Residues 3336–3347 (QEAKERKTKDDE) show a composition bias toward basic and acidic residues. Ser-3358 and Ser-3359 each carry phosphoserine. Thr-3381 bears the Phosphothreonine mark. Phosphoserine occurs at positions 3386 and 3406. Over residues 3421-3432 (SSFSEDMSNIRS) the composition is skewed to polar residues. Positions 3433–3443 (QHAEEQSNNGR) are enriched in basic and acidic residues. Ser-3503 is modified (phosphoserine).

Belongs to the peptidase C19 family. Interacts with AXIN1 and AXIN2. Expressed in brain at low level.

The catalysed reaction is Thiol-dependent hydrolysis of ester, thioester, amide, peptide and isopeptide bonds formed by the C-terminal Gly of ubiquitin (a 76-residue protein attached to proteins as an intracellular targeting signal).. In terms of biological role, ubiquitin hydrolase that can remove conjugated ubiquitin from AXIN1 and AXIN2, thereby acting as a regulator of Wnt signaling pathway. Acts as an activator of the Wnt signaling pathway downstream of the beta-catenin destruction complex by deubiquitinating and stabilizing AXIN1 and AXIN2, leading to promote nuclear accumulation of AXIN1 and AXIN2 and positively regulate beta-catenin (CTNBB1)-mediated transcription. Recognizes and hydrolyzes the peptide bond at the C-terminal Gly of ubiquitin. Involved in the processing of poly-ubiquitin precursors as well as that of ubiquitinated proteins. In Homo sapiens (Human), this protein is Ubiquitin carboxyl-terminal hydrolase 34 (USP34).